The chain runs to 484 residues: Malonate-semialdehyde dehydrogenase 1 (484 aa).

Positions 154, 178, 181, 182, and 231 each coordinate NAD(+). Residue Cys286 is the Nucleophile of the active site. NAD(+) is bound at residue Glu384.

Belongs to the aldehyde dehydrogenase family. IolA subfamily. In terms of assembly, homotetramer.

The catalysed reaction is 3-oxopropanoate + NAD(+) + CoA + H2O = hydrogencarbonate + acetyl-CoA + NADH + H(+). It catalyses the reaction 2-methyl-3-oxopropanoate + NAD(+) + CoA + H2O = propanoyl-CoA + hydrogencarbonate + NADH + H(+). It participates in polyol metabolism; myo-inositol degradation into acetyl-CoA; acetyl-CoA from myo-inositol: step 7/7. In terms of biological role, catalyzes the oxidation of malonate semialdehyde (MSA) and methylmalonate semialdehyde (MMSA) into acetyl-CoA and propanoyl-CoA, respectively. Is involved in a myo-inositol catabolic pathway. Bicarbonate, and not CO2, is the end-product of the enzymatic reaction. This Bacillus licheniformis (strain ATCC 14580 / DSM 13 / JCM 2505 / CCUG 7422 / NBRC 12200 / NCIMB 9375 / NCTC 10341 / NRRL NRS-1264 / Gibson 46) protein is Malonate-semialdehyde dehydrogenase 1.